The chain runs to 141 residues: Endoribonuclease YbeY (141 aa).

His-107, His-111, and His-117 together coordinate Zn(2+).

The protein belongs to the endoribonuclease YbeY family. It depends on Zn(2+) as a cofactor.

It is found in the cytoplasm. In terms of biological role, single strand-specific metallo-endoribonuclease involved in late-stage 70S ribosome quality control and in maturation of the 3' terminus of the 16S rRNA. The sequence is that of Endoribonuclease YbeY from Leptospira interrogans serogroup Icterohaemorrhagiae serovar Lai (strain 56601).